The following is a 192-amino-acid chain: A-type ATP synthase subunit E (192 aa).

The protein belongs to the V-ATPase E subunit family. In terms of assembly, has multiple subunits with at least A(3), B(3), C, D, E, F, H, I and proteolipid K(x).

The protein localises to the cell membrane. In terms of biological role, component of the A-type ATP synthase that produces ATP from ADP in the presence of a proton gradient across the membrane. In Metallosphaera sedula (strain ATCC 51363 / DSM 5348 / JCM 9185 / NBRC 15509 / TH2), this protein is A-type ATP synthase subunit E.